A 342-amino-acid polypeptide reads, in one-letter code: Probable deoxyhypusine synthase (342 aa).

Lys307 acts as the Nucleophile in catalysis.

Belongs to the deoxyhypusine synthase family. NAD(+) is required as a cofactor.

It carries out the reaction [eIF5A protein]-L-lysine + spermidine = [eIF5A protein]-deoxyhypusine + propane-1,3-diamine. Its pathway is protein modification; eIF5A hypusination. In terms of biological role, catalyzes the NAD-dependent oxidative cleavage of spermidine and the subsequent transfer of the butylamine moiety of spermidine to the epsilon-amino group of a specific lysine residue of the eIF-5A precursor protein to form the intermediate deoxyhypusine residue. The chain is Probable deoxyhypusine synthase (dys) from Pyrococcus horikoshii (strain ATCC 700860 / DSM 12428 / JCM 9974 / NBRC 100139 / OT-3).